Reading from the N-terminus, the 128-residue chain is Aspartate 1-decarboxylase (128 aa).

Serine 25 acts as the Schiff-base intermediate with substrate; via pyruvic acid in catalysis. Serine 25 carries the pyruvic acid (Ser) modification. A substrate-binding site is contributed by threonine 57. Tyrosine 58 functions as the Proton donor in the catalytic mechanism. Glycine 73–alanine 75 serves as a coordination point for substrate.

The protein belongs to the PanD family. As to quaternary structure, heterooctamer of four alpha and four beta subunits. Pyruvate is required as a cofactor. In terms of processing, is synthesized initially as an inactive proenzyme, which is activated by self-cleavage at a specific serine bond to produce a beta-subunit with a hydroxyl group at its C-terminus and an alpha-subunit with a pyruvoyl group at its N-terminus.

The protein resides in the cytoplasm. It carries out the reaction L-aspartate + H(+) = beta-alanine + CO2. Its pathway is cofactor biosynthesis; (R)-pantothenate biosynthesis; beta-alanine from L-aspartate: step 1/1. Catalyzes the pyruvoyl-dependent decarboxylation of aspartate to produce beta-alanine. The sequence is that of Aspartate 1-decarboxylase from Chlorobaculum parvum (strain DSM 263 / NCIMB 8327) (Chlorobium vibrioforme subsp. thiosulfatophilum).